The following is a 217-amino-acid chain: 2-phospho-L-lactate guanylyltransferase (217 aa).

It belongs to the CofC family. As to quaternary structure, homodimer.

The enzyme catalyses (2S)-2-phospholactate + GTP + H(+) = (2S)-lactyl-2-diphospho-5'-guanosine + diphosphate. It participates in cofactor biosynthesis; coenzyme F420 biosynthesis. In terms of biological role, guanylyltransferase that catalyzes the activation of (2S)-2-phospholactate (2-PL) as (2S)-lactyl-2-diphospho-5'-guanosine, via the condensation of 2-PL with GTP. It is involved in the biosynthesis of coenzyme F420, a hydride carrier cofactor. The polypeptide is 2-phospho-L-lactate guanylyltransferase (Halorubrum lacusprofundi (strain ATCC 49239 / DSM 5036 / JCM 8891 / ACAM 34)).